The following is a 1233-amino-acid chain: Mitogen-activated protein kinase kinase kinase kinase 4 (1233 aa).

The residue at position 2 (Ala-2) is an N-acetylalanine. Phosphoserine is present on Ser-5. The region spanning 25–289 (FELVEVVGNG…EQLLKHPFIR (265 aa)) is the Protein kinase domain. ATP-binding positions include 31–39 (VGNGTYGQV) and Lys-53. The active-site Proton acceptor is Asp-152. 3 disordered regions span residues 305-348 (IDRT…VPGE), 401-463 (QKEQ…VERE), and 489-805 (QAML…ETES). Residues 316-337 (DETEYEYSGSEEEEEEVPEQEG) show a composition bias toward acidic residues. Phosphoserine occurs at positions 323 and 325. A compositionally biased stretch (basic and acidic residues) spans 521 to 537 (PEPKPHYDPADRAREVQ). Ser-543 carries the phosphoserine modification. Residues 544–559 (LKNNVSPVSRSHSFSD) are compositionally biased toward polar residues. Phosphoserine occurs at positions 619, 621, 629, and 646. The span at 654 to 663 (LLWERVEKLV) shows a compositional bias: basic and acidic residues. The span at 666–692 (PGSGSSSGSSNSGSQPGSHPGSQSGSG) shows a compositional bias: low complexity. 3 positions are modified to phosphoserine: Ser-691, Ser-703, and Ser-706. Basic and acidic residues-rich tracts occupy residues 713 to 726 (SAAK…EVFR) and 741 to 756 (KELR…HKVT). Positions 766 to 781 (GTTDEEEEDVEQEGAD) are enriched in acidic residues. Polar residues predominate over residues 783-803 (STSGPEDTRAASSPNLSNGET). A phosphoserine mark is found at Ser-785, Ser-794, Ser-795, Ser-799, and Ser-817. Position 822 is a phosphothreonine (Thr-822). Phosphoserine occurs at positions 846, 849, 894, and 907. Residues 852–1206 (PFIDPRLLQI…LKFLCGRNDK (355 aa)) form a mediates interaction with RAP2A region. One can recognise a CNH domain in the interval 920 to 1207 (NSEILCAALW…KFLCGRNDKV (288 aa)).

Belongs to the protein kinase superfamily. STE Ser/Thr protein kinase family. STE20 subfamily. Interacts with the SH3 domain of the adapter proteins Nck. Interacts (via its CNH regulatory domain) with ATL1 (via the N-terminal region). Interacts with RAP2A (GTP-bound form preferentially). It depends on Mg(2+) as a cofactor. Appears to be ubiquitous, expressed in all tissue types examined. Highest levels observed in heart and brain.

The protein resides in the cytoplasm. The enzyme catalyses L-seryl-[protein] + ATP = O-phospho-L-seryl-[protein] + ADP + H(+). It catalyses the reaction L-threonyl-[protein] + ATP = O-phospho-L-threonyl-[protein] + ADP + H(+). Serine/threonine kinase that plays a role in the response to environmental stress and cytokines such as TNF-alpha. Appears to act upstream of the JUN N-terminal pathway. Activator of the Hippo signaling pathway which plays a pivotal role in organ size control and tumor suppression by restricting proliferation and promoting apoptosis. MAP4Ks act in parallel to and are partially redundant with STK3/MST2 and STK4/MST2 in the phosphorylation and activation of LATS1/2, and establish MAP4Ks as components of the expanded Hippo pathway. Phosphorylates SMAD1 on Thr-322. The sequence is that of Mitogen-activated protein kinase kinase kinase kinase 4 (Map4k4) from Mus musculus (Mouse).